Here is a 132-residue protein sequence, read N- to C-terminus: Large ribosomal subunit protein bL12 (132 aa).

It belongs to the bacterial ribosomal protein bL12 family. In terms of assembly, homodimer. Part of the ribosomal stalk of the 50S ribosomal subunit. Forms a multimeric L10(L12)X complex, where L10 forms an elongated spine to which 2 to 4 L12 dimers bind in a sequential fashion. Binds GTP-bound translation factors.

Functionally, forms part of the ribosomal stalk which helps the ribosome interact with GTP-bound translation factors. Is thus essential for accurate translation. This Chloroflexus aurantiacus (strain ATCC 29366 / DSM 635 / J-10-fl) protein is Large ribosomal subunit protein bL12.